The following is a 22-amino-acid chain: Caerin-3.4 (22 aa).

Lysine amide is present on Lys22.

As to expression, expressed by the skin parotoid and/or rostral glands.

The protein resides in the secreted. Its function is as follows. Antibacterial peptide, that adopts an alpha helical conformation which can disrupt bacterial membranes. Each caerin displays a different antimicrobial specificity. In Ranoidea caerulea (Green tree frog), this protein is Caerin-3.4.